The sequence spans 336 residues: D-erythrose-4-phosphate dehydrogenase (336 aa).

Residue 11 to 12 (RI) participates in NAD(+) binding. Residues 153–155 (SCT), R199, 212–213 (TR), and R235 each bind substrate. Catalysis depends on C154, which acts as the Nucleophile. N317 is a binding site for NAD(+).

This sequence belongs to the glyceraldehyde-3-phosphate dehydrogenase family. Epd subfamily. Homotetramer.

The protein resides in the cytoplasm. It catalyses the reaction D-erythrose 4-phosphate + NAD(+) + H2O = 4-phospho-D-erythronate + NADH + 2 H(+). Its pathway is cofactor biosynthesis; pyridoxine 5'-phosphate biosynthesis; pyridoxine 5'-phosphate from D-erythrose 4-phosphate: step 1/5. Functionally, catalyzes the NAD-dependent conversion of D-erythrose 4-phosphate to 4-phosphoerythronate. In Alteromonas mediterranea (strain DSM 17117 / CIP 110805 / LMG 28347 / Deep ecotype), this protein is D-erythrose-4-phosphate dehydrogenase.